The sequence spans 376 residues: Chaperone protein DnaJ (376 aa).

One can recognise a J domain in the interval 5–70 (DYYEVLGVAR…NKRRAYDAHG (66 aa)). The CR-type zinc-finger motif lies at 132–209 (GIERRIEIPT…CHGAGRVEEN (78 aa)). The Zn(2+) site is built by Cys-145, Cys-148, Cys-161, Cys-164, Cys-183, Cys-186, Cys-197, and Cys-200. CXXCXGXG motif repeat units follow at residues 145–152 (CVSCHGSG), 161–168 (CGTCHGRG), 183–190 (CPHCDGRG), and 197–204 (CKTCHGAG).

This sequence belongs to the DnaJ family. In terms of assembly, homodimer. Zn(2+) is required as a cofactor.

Its subcellular location is the cytoplasm. Participates actively in the response to hyperosmotic and heat shock by preventing the aggregation of stress-denatured proteins and by disaggregating proteins, also in an autonomous, DnaK-independent fashion. Unfolded proteins bind initially to DnaJ; upon interaction with the DnaJ-bound protein, DnaK hydrolyzes its bound ATP, resulting in the formation of a stable complex. GrpE releases ADP from DnaK; ATP binding to DnaK triggers the release of the substrate protein, thus completing the reaction cycle. Several rounds of ATP-dependent interactions between DnaJ, DnaK and GrpE are required for fully efficient folding. Also involved, together with DnaK and GrpE, in the DNA replication of plasmids through activation of initiation proteins. This Xanthomonas oryzae pv. oryzae (strain PXO99A) protein is Chaperone protein DnaJ.